Here is a 96-residue protein sequence, read N- to C-terminus: Integration host factor subunit beta (96 aa).

The tract at residues 59 to 86 (RVGRNPKTGETVELDGKHVPHFKPGKEL) is disordered. The span at 72–86 (LDGKHVPHFKPGKEL) shows a compositional bias: basic and acidic residues.

Belongs to the bacterial histone-like protein family. Heterodimer of an alpha and a beta chain.

This protein is one of the two subunits of integration host factor, a specific DNA-binding protein that functions in genetic recombination as well as in transcriptional and translational control. The protein is Integration host factor subunit beta of Pseudoalteromonas atlantica (strain T6c / ATCC BAA-1087).